A 298-amino-acid polypeptide reads, in one-letter code: Acetylglutamate kinase (298 aa).

Residues 61–62, Arg83, and Asn188 each bind substrate; that span reads GG.

This sequence belongs to the acetylglutamate kinase family. ArgB subfamily.

The protein resides in the cytoplasm. It catalyses the reaction N-acetyl-L-glutamate + ATP = N-acetyl-L-glutamyl 5-phosphate + ADP. It functions in the pathway amino-acid biosynthesis; L-arginine biosynthesis; N(2)-acetyl-L-ornithine from L-glutamate: step 2/4. Functionally, catalyzes the ATP-dependent phosphorylation of N-acetyl-L-glutamate. The sequence is that of Acetylglutamate kinase from Syntrophobacter fumaroxidans (strain DSM 10017 / MPOB).